The primary structure comprises 271 residues: Putative phosphoenolpyruvate synthase regulatory protein (271 aa).

152–159 (GVSRCGKT) is an ADP binding site.

Belongs to the pyruvate, phosphate/water dikinase regulatory protein family. PSRP subfamily.

The catalysed reaction is [pyruvate, water dikinase] + ADP = [pyruvate, water dikinase]-phosphate + AMP + H(+). The enzyme catalyses [pyruvate, water dikinase]-phosphate + phosphate + H(+) = [pyruvate, water dikinase] + diphosphate. Bifunctional serine/threonine kinase and phosphorylase involved in the regulation of the phosphoenolpyruvate synthase (PEPS) by catalyzing its phosphorylation/dephosphorylation. The protein is Putative phosphoenolpyruvate synthase regulatory protein of Legionella pneumophila (strain Paris).